The primary structure comprises 135 residues: NAD(P)H-quinone oxidoreductase subunit 3 (135 aa).

Transmembrane regions (helical) follow at residues 15-35 (LMFV…AAAV), 79-99 (MFAL…PWAV), and 104-124 (LGLL…VALA).

It belongs to the complex I subunit 3 family. NDH-1 can be composed of about 15 different subunits; different subcomplexes with different compositions have been identified which probably have different functions.

Its subcellular location is the cellular thylakoid membrane. The catalysed reaction is a plastoquinone + NADH + (n+1) H(+)(in) = a plastoquinol + NAD(+) + n H(+)(out). It carries out the reaction a plastoquinone + NADPH + (n+1) H(+)(in) = a plastoquinol + NADP(+) + n H(+)(out). Its function is as follows. NDH-1 shuttles electrons from an unknown electron donor, via FMN and iron-sulfur (Fe-S) centers, to quinones in the respiratory and/or the photosynthetic chain. The immediate electron acceptor for the enzyme in this species is believed to be plastoquinone. Couples the redox reaction to proton translocation, and thus conserves the redox energy in a proton gradient. Cyanobacterial NDH-1 also plays a role in inorganic carbon-concentration. This Synechococcus sp. (strain CC9311) protein is NAD(P)H-quinone oxidoreductase subunit 3.